Reading from the N-terminus, the 450-residue chain is Bifunctional protein GlmU (450 aa).

Residues 1-236 (MTAHKPFSAV…AWEVSGVNNR (236 aa)) form a pyrophosphorylase region. UDP-N-acetyl-alpha-D-glucosamine contacts are provided by residues 12 to 15 (LAAG), K26, Q79, 84 to 85 (GT), 107 to 109 (YGD), G147, E162, N177, and N234. D109 contacts Mg(2+). N234 is a Mg(2+) binding site. The tract at residues 237–257 (AELASLESLWQNRKRQDVMKD) is linker. An N-acetyltransferase region spans residues 258–450 (GASLIAPETV…KKFRQRKKKK (193 aa)). Residues R323 and K341 each coordinate UDP-N-acetyl-alpha-D-glucosamine. The Proton acceptor role is filled by H353. Residues Y356 and N367 each contribute to the UDP-N-acetyl-alpha-D-glucosamine site. Acetyl-CoA-binding positions include 376–377 (NY), S395, A413, and R430.

It in the N-terminal section; belongs to the N-acetylglucosamine-1-phosphate uridyltransferase family. In the C-terminal section; belongs to the transferase hexapeptide repeat family. As to quaternary structure, homotrimer. The cofactor is Mg(2+).

The protein localises to the cytoplasm. The catalysed reaction is alpha-D-glucosamine 1-phosphate + acetyl-CoA = N-acetyl-alpha-D-glucosamine 1-phosphate + CoA + H(+). It carries out the reaction N-acetyl-alpha-D-glucosamine 1-phosphate + UTP + H(+) = UDP-N-acetyl-alpha-D-glucosamine + diphosphate. Its pathway is nucleotide-sugar biosynthesis; UDP-N-acetyl-alpha-D-glucosamine biosynthesis; N-acetyl-alpha-D-glucosamine 1-phosphate from alpha-D-glucosamine 6-phosphate (route II): step 2/2. It functions in the pathway nucleotide-sugar biosynthesis; UDP-N-acetyl-alpha-D-glucosamine biosynthesis; UDP-N-acetyl-alpha-D-glucosamine from N-acetyl-alpha-D-glucosamine 1-phosphate: step 1/1. It participates in bacterial outer membrane biogenesis; LPS lipid A biosynthesis. Functionally, catalyzes the last two sequential reactions in the de novo biosynthetic pathway for UDP-N-acetylglucosamine (UDP-GlcNAc). The C-terminal domain catalyzes the transfer of acetyl group from acetyl coenzyme A to glucosamine-1-phosphate (GlcN-1-P) to produce N-acetylglucosamine-1-phosphate (GlcNAc-1-P), which is converted into UDP-GlcNAc by the transfer of uridine 5-monophosphate (from uridine 5-triphosphate), a reaction catalyzed by the N-terminal domain. The chain is Bifunctional protein GlmU from Zymomonas mobilis subsp. mobilis (strain ATCC 31821 / ZM4 / CP4).